We begin with the raw amino-acid sequence, 35 residues long: Photosystem II reaction center protein T (35 aa).

A helical membrane pass occupies residues 3-23; it reads ALVYTFLLVSTLGIIFFAIFF.

This sequence belongs to the PsbT family. PSII is composed of 1 copy each of membrane proteins PsbA, PsbB, PsbC, PsbD, PsbE, PsbF, PsbH, PsbI, PsbJ, PsbK, PsbL, PsbM, PsbT, PsbY, PsbZ, Psb30/Ycf12, at least 3 peripheral proteins of the oxygen-evolving complex and a large number of cofactors. It forms dimeric complexes.

The protein localises to the plastid. It localises to the chloroplast thylakoid membrane. Functionally, found at the monomer-monomer interface of the photosystem II (PS II) dimer, plays a role in assembly and dimerization of PSII. PSII is a light-driven water plastoquinone oxidoreductase, using light energy to abstract electrons from H(2)O, generating a proton gradient subsequently used for ATP formation. This chain is Photosystem II reaction center protein T, found in Cycas revoluta (Sago palm).